A 110-amino-acid chain; its full sequence is Hydrogenase maturation factor HypA (110 aa).

Residue H2 participates in Ni(2+) binding. Zn(2+) contacts are provided by C70, C73, C86, and C89.

It belongs to the HypA/HybF family.

In terms of biological role, involved in the maturation of [NiFe] hydrogenases. Required for nickel insertion into the metal center of the hydrogenase. The polypeptide is Hydrogenase maturation factor HypA (Geobacter sulfurreducens (strain ATCC 51573 / DSM 12127 / PCA)).